The sequence spans 313 residues: Peptidyl-prolyl cis-trans isomerase 9 (313 aa).

The PPIase cyclophilin-type domain occupies 9-174 (FLDMALDEKP…AKVRIFNSGE (166 aa)). 2 stretches are compositionally biased toward basic and acidic residues: residues 216–230 (EERE…ESSR) and 253–269 (RGDR…KDDF). 2 disordered regions span residues 216 to 274 (EERE…IAVR) and 288 to 313 (TPEH…DLQP).

The protein belongs to the cyclophilin-type PPIase family.

The enzyme catalyses [protein]-peptidylproline (omega=180) = [protein]-peptidylproline (omega=0). Functionally, PPIases accelerate the folding of proteins. It catalyzes the cis-trans isomerization of proline imid ic peptide bonds in oligopeptides. Thought to function as a catalyst in the folding and modification of cuticle collagens. The chain is Peptidyl-prolyl cis-trans isomerase 9 from Caenorhabditis briggsae.